Reading from the N-terminus, the 535-residue chain is Inositol 1,4,5-trisphosphate receptor-interacting protein-like 2 (535 aa).

Residues 1–32 form the signal peptide; it reads MSVRYTLNLRVFWPLVTGLCTALVCLYHALRS. The Extracellular portion of the chain corresponds to 33–43; it reads SEDARAESPDG. Residues 44–64 form a helical membrane-spanning segment; it reads ADSGFPLLKVAILLLLGYILL. Over 65–535 the chain is Cytoplasmic; it reads RCRHAIRQRL…RIQGSPEDEP (471 aa). The residue at position 139 (Ser139) is a Phosphoserine.

Belongs to the ITPRIP family.

The protein localises to the membrane. The polypeptide is Inositol 1,4,5-trisphosphate receptor-interacting protein-like 2 (Itpripl2) (Mus musculus (Mouse)).